The following is a 392-amino-acid chain: Putative transactivator/viroplasmin protein (392 aa).

Positions 1 to 88 form a coiled coil; sequence MEDMMKQILE…NVEEQYQWKN (88 aa). The segment at 358 to 392 is disordered; that stretch reads EIEKEEPGEEKNLEDVSTDDNNEKKKIRSVIVKET.

Belongs to the caulimoviridae viroplasmin family.

It is found in the host cytoplasm. Enhances the translation of downstream ORFs on polycistronic mRNAs derived from cassava vein mosaic virus. The sequence is that of Putative transactivator/viroplasmin protein from Cassava vein mosaic virus (CsVMV).